The sequence spans 201 residues: Small ribosomal subunit protein uS4 (201 aa).

The 61-residue stretch at 91-151 (SRLDNVVYRA…EKSRKMVWFD (61 aa)) folds into the S4 RNA-binding domain.

It belongs to the universal ribosomal protein uS4 family. As to quaternary structure, part of the 30S ribosomal subunit. Contacts protein S5. The interaction surface between S4 and S5 is involved in control of translational fidelity.

In terms of biological role, one of the primary rRNA binding proteins, it binds directly to 16S rRNA where it nucleates assembly of the body of the 30S subunit. Functionally, with S5 and S12 plays an important role in translational accuracy. This chain is Small ribosomal subunit protein uS4, found in Corynebacterium kroppenstedtii (strain DSM 44385 / JCM 11950 / CIP 105744 / CCUG 35717).